The primary structure comprises 308 residues: MATITAAMVKELRETTGVGMMDCKQALAENDGNMEAAVDWLRKKGLSKAAKKAGRVAAEGLIGALTDGTKGVVIEVNSETDFVARNEQFQGLVKMIAQVALKVGADVDKINAAPVGSSTVAGAISDAIATIGENMTLRRAAALEVTQGVVASYIHNAVIDGAGKMGVIVALESTGKADELGVLGRQLAMHIAATNPQALDPAGLDPEVVRREREVMADKYRQQGKPENMIEKIVENGLKTYYKEVCLLEQAYIHDEKGKAVGQAVKDAEGKVGAPIKITGFFRYALGEGIEKQTSDFAAEVAAASGQK.

Residues Thr-80 to Val-83 form an involved in Mg(2+) ion dislocation from EF-Tu region.

The protein belongs to the EF-Ts family.

It is found in the cytoplasm. Its function is as follows. Associates with the EF-Tu.GDP complex and induces the exchange of GDP to GTP. It remains bound to the aminoacyl-tRNA.EF-Tu.GTP complex up to the GTP hydrolysis stage on the ribosome. The polypeptide is Elongation factor Ts (Rhodopseudomonas palustris (strain BisB5)).